A 391-amino-acid chain; its full sequence is MAVSESQLKKMMSKYKYRDLTVRQTVNVIAMYKDLKPVLDSYVFNDGSSRELVNLTGTIPVRYRGNIYNIPICLWLLDTYPYNPPICFVKPTSSMTIKTGKHVDANGKIYLPYLHDWKHPRSELLELIQIMIVIFGEEPPVFSRPTVSASYPPYTAAGPPNTSYLPSMPSGISAYPSGYPPNPSGYPGCPYPPAGPYPATTSSQYPSQPPVTTAGPSRDGTISEDTIRASLISAVSDKLRWRMKEEMDGAQAELNALKRTEEDLKKGHQKLEEMVTRLDQEVAEVDKNIELLKKKDEELSSALEKMENQSENNDIDEVIIPTAPLYKQILNLYAEENAIEDTIFYLGEALRRGVIDLDVFLKHVRLLSRKQFQLRALMQKARKTAGLSDLY.

Alanine 2 bears the N-acetylalanine mark. The 144-residue stretch at 2–145 (AVSESQLKKM…GEEPPVFSRP (144 aa)) folds into the UEV domain. An interaction with CEP55 region spans residues 159-163 (PPNTS). The interval 195–222 (GPYPATTSSQYPSQPPVTTAGPSRDGTI) is disordered. Polar residues predominate over residues 200–215 (TTSSQYPSQPPVTTAG). Threonine 221 bears the Phosphothreonine mark. Residues 238–317 (KLRWRMKEEM…NQSENNDIDE (80 aa)) adopt a coiled-coil conformation. Positions 321–324 (PTAP) match the PTAP motif motif. An SB domain is found at 323–391 (APLYKQILNL…RKTAGLSDLY (69 aa)).

It belongs to the ubiquitin-conjugating enzyme family. UEV subfamily. As to quaternary structure, component of the ESCRT-I complex (endosomal sorting complex required for transport I) which consists of TSG101, VPS28, a VPS37 protein (VPS37A to -D) and MVB12A or MVB12B in a 1:1:1:1 stoichiometry. Interacts with VPS37A, VPS37B and VPS37C. Interacts with DMAP1. Interacts with ubiquitin. Interacts with AATF. Interacts with stathmin and GMCL. Component of an ESCRT-I complex (endosomal sorting complex required for transport I) which consists of TSG101, VPS28, VPS37A and UBAP1 in a 1:1:1:1 stoichiometry. Interacts with HGS; the interaction mediates the association with the ESCRT-0 complex. Interacts with GGA1 and GGA3. Interacts (via UEV domain) with PDCD6IP/AIP1. Interacts with VPS28, SNF8 and VPS36. Self-associates. Interacts with MVB12A; the association appears to be mediated by the TSG101-VPS37 binary subcomplex. Interacts with VPS37D. Interacts with LRSAM1. Interacts with CEP55; the interaction is required for cytokinesis. Interacts with PDCD6. Interacts with LITAF. Interacts with MGRN1. Interacts with ARRDC1; recruits TSG101 to the plasma membrane. In terms of processing, monoubiquitinated at multiple sites by LRSAM1 and by MGRN1. Ubiquitination inactivates it, possibly by regulating its shuttling between an active membrane-bound protein and an inactive soluble form. Ubiquitination by MGRN1 requires the presence of UBE2D1.

The protein localises to the cytoplasm. Its subcellular location is the early endosome membrane. The protein resides in the late endosome membrane. It is found in the cytoskeleton. It localises to the microtubule organizing center. The protein localises to the centrosome. Its subcellular location is the midbody. The protein resides in the midbody ring. It is found in the nucleus. Component of the ESCRT-I complex, a regulator of vesicular trafficking process. Binds to ubiquitinated cargo proteins and is required for the sorting of endocytic ubiquitinated cargos into multivesicular bodies (MVBs). Mediates the association between the ESCRT-0 and ESCRT-I complex. Required for completion of cytokinesis; the function requires CEP55. May be involved in cell growth and differentiation. Acts as a negative growth regulator. Required for the exosomal release of SDCBP, CD63 and syndecan. It may also play a role in the extracellular release of microvesicles that differ from the exosomes. The sequence is that of Tumor susceptibility gene 101 protein (Tsg101) from Rattus norvegicus (Rat).